The chain runs to 462 residues: Cysteine--tRNA ligase (462 aa).

Cys29 lines the Zn(2+) pocket. The 'HIGH' region motif lies at 31–41 (MTVYDLCHLGH). Zn(2+) is bound by residues Cys217, His242, and Glu246. The 'KMSKS' region motif lies at 274–278 (KMSKS). Residue Lys277 coordinates ATP.

This sequence belongs to the class-I aminoacyl-tRNA synthetase family. In terms of assembly, monomer. The cofactor is Zn(2+).

It localises to the cytoplasm. The enzyme catalyses tRNA(Cys) + L-cysteine + ATP = L-cysteinyl-tRNA(Cys) + AMP + diphosphate. The chain is Cysteine--tRNA ligase from Polaromonas sp. (strain JS666 / ATCC BAA-500).